The sequence spans 107 residues: Probable 4-amino-4-deoxy-L-arabinose-phosphoundecaprenol flippase subunit ArnE (107 aa).

The region spanning Arg-31–Gly-105 is the EamA domain. 3 consecutive transmembrane segments (helical) span residues Gly-34 to Leu-54, Val-57 to Ala-77, and Ile-85 to Gly-105.

It belongs to the ArnE family. In terms of assembly, heterodimer of ArnE and ArnF.

It is found in the cell inner membrane. The protein operates within bacterial outer membrane biogenesis; lipopolysaccharide biosynthesis. Translocates 4-amino-4-deoxy-L-arabinose-phosphoundecaprenol (alpha-L-Ara4N-phosphoundecaprenol) from the cytoplasmic to the periplasmic side of the inner membrane. The polypeptide is Probable 4-amino-4-deoxy-L-arabinose-phosphoundecaprenol flippase subunit ArnE (Enterobacter sp. (strain 638)).